The chain runs to 134 residues: Small ribosomal subunit protein uS8c (134 aa).

The protein belongs to the universal ribosomal protein uS8 family. As to quaternary structure, part of the 30S ribosomal subunit.

The protein resides in the plastid. It is found in the chloroplast. One of the primary rRNA binding proteins, it binds directly to 16S rRNA central domain where it helps coordinate assembly of the platform of the 30S subunit. The sequence is that of Small ribosomal subunit protein uS8c (rps8) from Lepidium virginicum (Virginia pepperweed).